The primary structure comprises 601 residues: Somatic embryogenesis receptor kinase 5 (601 aa).

The signal sequence occupies residues 1–24 (MEHGSSRGFIWLILFLDFVSRVTG). Residues 25-215 (KTQVDALIAL…SPSPSPSGTS (191 aa)) lie on the Extracellular side of the membrane. N-linked (GlcNAc...) asparagine glycans are attached at residues N52, N81, N105, N129, N151, and N184. LRR repeat units lie at residues 71–94 (SVTR…AQLP), 95–118 (NLQY…GDLM), 119–141 (ELVS…LGKL), 143–165 (KLRF…LTAL), and 166–188 (PLDV…GSFS). The chain crosses the membrane as a helical span at residues 216 to 236 (AAIVVGVAAGAALLFALAWWL). The Cytoplasmic segment spans residues 237 to 601 (RRKLQGHFLD…IENDYPSGPR (365 aa)). A Phosphothreonine modification is found at T272. The region spanning 275-572 (FSKRNVLGKG…KEEMPIHDFN (298 aa)) is the Protein kinase domain. 281–289 (LGKGRFGIL) lines the ATP pocket. T298 bears the Phosphothreonine mark. K303 serves as a coordination point for ATP. S356 and S359 each carry phosphoserine. The active-site Proton acceptor is D402. Residues T435, T436, and T441 each carry the phosphothreonine modification. Y449 bears the Phosphotyrosine mark. Phosphoserine is present on S451. T452 carries the phosphothreonine modification. Phosphoserine occurs at positions 456 and 506. Phosphothreonine is present on T532.

Belongs to the protein kinase superfamily. Ser/Thr protein kinase family. In terms of assembly, interacts with TMK4/BARK1. Autophosphorylated.

The protein resides in the cell membrane. It carries out the reaction L-seryl-[protein] + ATP = O-phospho-L-seryl-[protein] + ADP + H(+). The catalysed reaction is L-threonyl-[protein] + ATP = O-phospho-L-threonyl-[protein] + ADP + H(+). Its function is as follows. Serine/threonine-kinase of unknown function. This Arabidopsis thaliana (Mouse-ear cress) protein is Somatic embryogenesis receptor kinase 5 (SERK5).